The chain runs to 441 residues: NADH-quinone oxidoreductase subunit D 1 (441 aa).

Belongs to the complex I 49 kDa subunit family. NDH-1 is composed of 14 different subunits. Subunits NuoB, C, D, E, F, and G constitute the peripheral sector of the complex.

Its subcellular location is the cell membrane. It catalyses the reaction a quinone + NADH + 5 H(+)(in) = a quinol + NAD(+) + 4 H(+)(out). NDH-1 shuttles electrons from NADH, via FMN and iron-sulfur (Fe-S) centers, to quinones in the respiratory chain. The immediate electron acceptor for the enzyme in this species is believed to be a menaquinone. Couples the redox reaction to proton translocation (for every two electrons transferred, four hydrogen ions are translocated across the cytoplasmic membrane), and thus conserves the redox energy in a proton gradient. The chain is NADH-quinone oxidoreductase subunit D 1 from Salinispora arenicola (strain CNS-205).